A 144-amino-acid chain; its full sequence is Interleukin-9 (144 aa).

A signal peptide spans 1 to 18; it reads MLLAMVLTSALLLCSVAG. At Gln19 the chain carries Pyrrolidone carboxylic acid. N-linked (GlcNAc...) asparagine glycosylation is found at Asn50, Asn63, Asn78, and Asn114.

This sequence belongs to the IL-7/IL-9 family. As to quaternary structure, interacts with IL9R. Interacts with IL2RG.

Its subcellular location is the secreted. Its function is as follows. Multifunctional cytokine secreted mainly by T-helper 2 lymphocytes and also mast cells or NKT cells that plays important roles in the immune response against parasites. Affects intestinal epithelial permeability and adaptive immunity. In addition, induces the differentiation of specific T-cell subsets such as IL-17 producing helper T-cells (TH17) and also proliferation and differentiation of mast cells. Mechanistically, exerts its biological effects through a receptor composed of IL9R subunit and a signal transducing subunit IL2RG. Receptor stimulation results in the rapid activation of JAK1 and JAK3 kinase activities leading to STAT1, STAT3 and STAT5-mediated transcriptional programs. Induction of differentiation genes seems to be mediated by STAT1 alone, while protection of cells from apoptosis depends on STAT3 and STAT5. This Homo sapiens (Human) protein is Interleukin-9 (IL9).